Reading from the N-terminus, the 181-residue chain is Probable inactive acireductone dioxygenase 2 (181 aa).

This sequence belongs to the acireductone dioxygenase (ARD) family.

It is found in the cytoplasm. The protein resides in the nucleus. Probable inactive acireductone dioxygenase. This Sorghum bicolor (Sorghum) protein is Probable inactive acireductone dioxygenase 2.